Consider the following 709-residue polypeptide: Elongation factor G (709 aa).

Positions 8 to 290 constitute a tr-type G domain; sequence NRYRNIGISA…AVIQYMPAPQ (283 aa). GTP is bound by residues 17–24, 88–92, and 142–145; these read AHIDAGKT, DTPGH, and NKMD.

Belongs to the TRAFAC class translation factor GTPase superfamily. Classic translation factor GTPase family. EF-G/EF-2 subfamily.

It localises to the cytoplasm. Its function is as follows. Catalyzes the GTP-dependent ribosomal translocation step during translation elongation. During this step, the ribosome changes from the pre-translocational (PRE) to the post-translocational (POST) state as the newly formed A-site-bound peptidyl-tRNA and P-site-bound deacylated tRNA move to the P and E sites, respectively. Catalyzes the coordinated movement of the two tRNA molecules, the mRNA and conformational changes in the ribosome. The protein is Elongation factor G of Psychrobacter sp. (strain PRwf-1).